A 108-amino-acid chain; its full sequence is Small ribosomal subunit protein uS10 (108 aa).

It belongs to the universal ribosomal protein uS10 family. Part of the 30S ribosomal subunit.

In terms of biological role, involved in the binding of tRNA to the ribosomes. The polypeptide is Small ribosomal subunit protein uS10 (Rhodopirellula baltica (strain DSM 10527 / NCIMB 13988 / SH1)).